We begin with the raw amino-acid sequence, 457 residues long: Histidine--tRNA ligase (457 aa).

This sequence belongs to the class-II aminoacyl-tRNA synthetase family. As to quaternary structure, homodimer.

The protein resides in the cytoplasm. The catalysed reaction is tRNA(His) + L-histidine + ATP = L-histidyl-tRNA(His) + AMP + diphosphate + H(+). The protein is Histidine--tRNA ligase of Mesoplasma florum (strain ATCC 33453 / NBRC 100688 / NCTC 11704 / L1) (Acholeplasma florum).